Reading from the N-terminus, the 254-residue chain is MQTIQLIIFVAFVLSRAAASISSFSDPTSIVNINHDANRLSRALAAGQNQTQRSLRQHEGEDRGAIDKADEVVSKMKALMGTAKNVPNNLAALIAKRSKTAGEFVRRPFLVSKLSKRYNIADQLSFSTLKQLDKIDNMRIVDIKNGIKGNKKTPNGMRRKIKHFEGMKTAPQKFLESHVGRDMQRYGKDGSRWLSAGVVTRTTDQGERQILLISSSNPARGDFLLPKGGWDRGEKIKKAALREVMEEGGVCRAL.

A signal peptide spans 1–19 (MQTIQLIIFVAFVLSRAAA). Asn49 carries an N-linked (GlcNAc...) asparagine glycan. The RxLR-dEER signature appears at 53–63 (RSLRQHEGEDR). The Nudix hydrolase domain maps to 191 to 254 (SRWLSAGVVT…MEEGGVCRAL (64 aa)). The Nudix box signature appears at 228–249 (GGWDRGEKIKKAALREVMEEGG).

This sequence in the N-terminal section; belongs to the RxLR effector family. The protein in the C-terminal section; belongs to the Nudix hydrolase family.

It is found in the secreted. Its subcellular location is the host cytoplasm. The protein resides in the host nucleus. The protein localises to the host nucleolus. Its function is as follows. Effector that is involved in host plant infection. Contributes to virulence during the early infection stage, by inhibiting plant defense responses induced by both PAMP-triggered immunity (PTI) and effector-triggered immunity (ETI). This is RxLR effector protein CRE5 from Phytophthora infestans (strain T30-4) (Potato late blight agent).